Here is a 426-residue protein sequence, read N- to C-terminus: Serine--tRNA ligase (426 aa).

231 to 233 contributes to the L-serine binding site; it reads TSE. Residue 262–264 participates in ATP binding; that stretch reads RSE. Glu-285 lines the L-serine pocket. 349-352 lines the ATP pocket; the sequence is EISS. Ser-385 contacts L-serine.

Belongs to the class-II aminoacyl-tRNA synthetase family. Type-1 seryl-tRNA synthetase subfamily. In terms of assembly, homodimer. The tRNA molecule binds across the dimer.

It localises to the cytoplasm. It carries out the reaction tRNA(Ser) + L-serine + ATP = L-seryl-tRNA(Ser) + AMP + diphosphate + H(+). It catalyses the reaction tRNA(Sec) + L-serine + ATP = L-seryl-tRNA(Sec) + AMP + diphosphate + H(+). It participates in aminoacyl-tRNA biosynthesis; selenocysteinyl-tRNA(Sec) biosynthesis; L-seryl-tRNA(Sec) from L-serine and tRNA(Sec): step 1/1. Functionally, catalyzes the attachment of serine to tRNA(Ser). Is also able to aminoacylate tRNA(Sec) with serine, to form the misacylated tRNA L-seryl-tRNA(Sec), which will be further converted into selenocysteinyl-tRNA(Sec). This Legionella pneumophila (strain Lens) protein is Serine--tRNA ligase.